Reading from the N-terminus, the 495-residue chain is Ribose import ATP-binding protein RbsA 3 (495 aa).

ABC transporter domains lie at 5-240 (VRLR…VGRE) and 250-492 (AEIG…TGVK). 37–44 (GENGAGKS) contacts ATP.

The protein belongs to the ABC transporter superfamily. Ribose importer (TC 3.A.1.2.1) family. In terms of assembly, the complex is composed of an ATP-binding protein (RbsA), two transmembrane proteins (RbsC) and a solute-binding protein (RbsB).

The protein resides in the cell membrane. It carries out the reaction D-ribose(out) + ATP + H2O = D-ribose(in) + ADP + phosphate + H(+). Its function is as follows. Part of the ABC transporter complex RbsABC involved in ribose import. Responsible for energy coupling to the transport system. This is Ribose import ATP-binding protein RbsA 3 from Rubrobacter xylanophilus (strain DSM 9941 / JCM 11954 / NBRC 16129 / PRD-1).